Consider the following 261-residue polypeptide: Thiazole synthase (261 aa).

The Schiff-base intermediate with DXP role is filled by K95. 1-deoxy-D-xylulose 5-phosphate is bound by residues G156, 182 to 183, and 204 to 205; these read AG and NT.

It belongs to the ThiG family. In terms of assembly, homotetramer. Forms heterodimers with either ThiH or ThiS.

It localises to the cytoplasm. The catalysed reaction is [ThiS sulfur-carrier protein]-C-terminal-Gly-aminoethanethioate + 2-iminoacetate + 1-deoxy-D-xylulose 5-phosphate = [ThiS sulfur-carrier protein]-C-terminal Gly-Gly + 2-[(2R,5Z)-2-carboxy-4-methylthiazol-5(2H)-ylidene]ethyl phosphate + 2 H2O + H(+). The protein operates within cofactor biosynthesis; thiamine diphosphate biosynthesis. Its function is as follows. Catalyzes the rearrangement of 1-deoxy-D-xylulose 5-phosphate (DXP) to produce the thiazole phosphate moiety of thiamine. Sulfur is provided by the thiocarboxylate moiety of the carrier protein ThiS. In vitro, sulfur can be provided by H(2)S. The sequence is that of Thiazole synthase from Pectobacterium carotovorum subsp. carotovorum (strain PC1).